A 474-amino-acid chain; its full sequence is Hepatocyte nuclear factor 4-alpha (474 aa).

A DNA-binding region (nuclear receptor) is located at residues 57–132 (SALCAICGDR…AGMKKEAVQN (76 aa)). NR C4-type zinc fingers lie at residues 60-80 (CAIC…CDGC) and 96-120 (CRFS…LKKC). S142 and S143 each carry phosphoserine. The residue at position 144 (Y144) is a Phosphotyrosine. The NR LBD domain maps to 147 to 377 (SSLPSINALL…NLLQEMLLGG (231 aa)). Residue T166 is modified to Phosphothreonine. Phosphoserine is present on S167. Residues K234 and K307 each participate in a glycyl lysine isopeptide (Lys-Gly) (interchain with G-Cter in ubiquitin) cross-link. At S313 the chain carries Phosphoserine; by AMPK. The short motif at 368 to 376 (NLLQEMLLG) is the 9aaTAD element. Residues 413-450 (SNGQMCEWPRPRGQAATPETPQPSPPSGSGSESYKLLP) are disordered. Phosphothreonine occurs at positions 429 and 432. S436 carries the post-translational modification Phosphoserine. K458 bears the N6-acetyllysine mark.

It belongs to the nuclear hormone receptor family. NR2 subfamily. Homodimerization is required for HNF4-alpha to bind to its recognition site. Interacts with CLOCK, BMAL1 and PER1. Interacts with PER2. Interacts with CRY1 and CRY2. Interacts with NR0B2/SHP; the resulting heterodimer is transcriptionally inactive. Interacts with DDX3X; this interaction disrupts the interaction between HNF4 and NR0B2 that forms inactive heterodimers and enhances the formation of active HNF4 homodimers. Post-translationally, phosphorylated on tyrosine residue(s); phosphorylation is important for its DNA-binding activity. Phosphorylation may directly or indirectly play a regulatory role in the subnuclear distribution. Phosphorylation at Ser-313 by AMPK reduces the ability to form homodimers and bind DNA. Acetylation at Lys-458 lowers transcriptional activation by about two-fold. As to expression, expressed in the liver, pancreas and colon in a circadian manner.

The protein localises to the nucleus. In terms of biological role, transcriptional regulator which controls the expression of hepatic genes during the transition of endodermal cells to hepatic progenitor cells, facilitatating the recruitment of RNA pol II to the promoters of target genes. Activates the transcription of CYP2C38. Represses the CLOCK-BMAL1 transcriptional activity and is essential for circadian rhythm maintenance and period regulation in the liver and colon cells. This is Hepatocyte nuclear factor 4-alpha (Hnf4a) from Mus musculus (Mouse).